Reading from the N-terminus, the 68-residue chain is MAVQQNKVSKSRRNNRRAHDSLVAANPNECTNCGELKRPHHICAACGHYDDKEVVALTEEIDLEDDAA.

The segment at 1–21 (MAVQQNKVSKSRRNNRRAHDS) is disordered.

This sequence belongs to the bacterial ribosomal protein bL32 family.

This Roseobacter denitrificans (strain ATCC 33942 / OCh 114) (Erythrobacter sp. (strain OCh 114)) protein is Large ribosomal subunit protein bL32.